The following is a 328-amino-acid chain: NADH:quinone reductase (328 aa).

FMN is bound by residues glycine 22 to glutamine 24, threonine 75, lysine 124, alanine 150, serine 178 to glycine 180, and glycine 201 to threonine 202.

It belongs to the nitronate monooxygenase family. Monomer. The cofactor is FMN.

The enzyme catalyses a quinone + NADH + H(+) = a quinol + NAD(+). Its function is as follows. Catalyzes the NADH-dependent reduction of a broad spectrum of quinone substrates, generating the corresponding hydroquinones. Highly prefers NADH to NADPH as a reducing substrate. Also displays a small NADH oxidase activity. Does not exhibit nitronate monooxygenase activity; is inactive against propionate 3-nitronate, 3-nitropropionate, nitroethane, 1-nitropropane, 2-nitropropane, and the anionic forms ethylnitronate, propyl-1-nitronate, and propyl-2-nitronate. Has no azoreductase activity since it is not able to reduce the azo dye methyl red with NADH. May be required to maintain an appropriate [NAD(+)]/[NADH] ratio for the catabolism of fatty acids in P.aeruginosa PAO1. The polypeptide is NADH:quinone reductase (Pseudomonas aeruginosa (strain ATCC 15692 / DSM 22644 / CIP 104116 / JCM 14847 / LMG 12228 / 1C / PRS 101 / PAO1)).